We begin with the raw amino-acid sequence, 208 residues long: MKQRPTGPDTTPRNRRGFGRDTAVASVCGLVVALMVGASYAAVPFYNWFCRVTGFNGTTQVAAAAPQGGALKRTIAVRFDSNTNGLPWSFAPETTEIEIPIGQVTTVYYKVTNRAAHETTGQAAYNVAPLTVGAYFQKINCFCFTDQTLGPHETRELPVVFYVDPALATDSDNDTLNSITLSYTFYPLRSAAPKPLAASEAGPRQGAL.

The Cytoplasmic segment spans residues 1 to 19; it reads MKQRPTGPDTTPRNRRGFG. The chain crosses the membrane as a helical; Signal-anchor for type II membrane protein span at residues 20 to 42; that stretch reads RDTAVASVCGLVVALMVGASYAA. At 43-208 the chain is on the periplasmic side; the sequence is VPFYNWFCRV…SEAGPRQGAL (166 aa).

It belongs to the COX11/CtaG family.

It localises to the cell inner membrane. Exerts its effect at some terminal stage of cytochrome c oxidase synthesis, probably by being involved in the insertion of the copper B into subunit I. The sequence is that of Cytochrome c oxidase assembly protein CtaG from Rhodopseudomonas palustris (strain BisA53).